A 572-amino-acid polypeptide reads, in one-letter code: Methionine--tRNA ligase (572 aa).

The short motif at 11 to 21 is the 'HIGH' region element; that stretch reads PYVNHVPHLGT. Zn(2+) contacts are provided by Cys143, Cys146, Cys156, and Cys159. Positions 334–338 match the 'KMSKS' region motif; it reads QFSKS. Lys337 serves as a coordination point for ATP.

It belongs to the class-I aminoacyl-tRNA synthetase family. MetG type 1 subfamily. The cofactor is Zn(2+).

The protein localises to the cytoplasm. It catalyses the reaction tRNA(Met) + L-methionine + ATP = L-methionyl-tRNA(Met) + AMP + diphosphate. In terms of biological role, is required not only for elongation of protein synthesis but also for the initiation of all mRNA translation through initiator tRNA(fMet) aminoacylation. This Aeropyrum pernix (strain ATCC 700893 / DSM 11879 / JCM 9820 / NBRC 100138 / K1) protein is Methionine--tRNA ligase (metG).